A 129-amino-acid polypeptide reads, in one-letter code: Trefoil factor 2 (129 aa).

The first 23 residues, 1–23 (MGPRGAPLLVVVLVLGLHALAEG), serve as a signal peptide directing secretion. 2 P-type domains span residues 29–73 (CRCS…FHPL) and 79–122 (EQCV…FFPQ). Cystine bridges form between cysteine 29–cysteine 127, cysteine 31–cysteine 58, cysteine 42–cysteine 57, cysteine 52–cysteine 69, cysteine 81–cysteine 107, cysteine 91–cysteine 106, and cysteine 101–cysteine 118.

In terms of tissue distribution, expressed in the digestive tract, where it was found predominantly in the stomach with highest expression in the antrum. It is secreted predominantly from antral mucous cells into the lumen of the gastrointestinal tract.

The protein localises to the secreted. In terms of biological role, inhibits gastrointestinal motility and gastric acid secretion. Could function as a structural component of gastric mucus, possibly by stabilizing glycoproteins in the mucus gel through interactions with carbohydrate side chains. This is Trefoil factor 2 (Tff2) from Rattus norvegicus (Rat).